The primary structure comprises 485 residues: Rhamnulokinase (485 aa).

12-16 is a binding site for ATP; sequence ATSGR. Substrate is bound by residues Gly-80 and 238 to 240; that span reads HDT. The Proton acceptor role is filled by Asp-239. Thr-261 serves as a coordination point for ATP. Substrate is bound at residue Asn-298. Glu-306 is a binding site for ATP. A disulfide bridge connects residues Cys-355 and Cys-372. Gly-404 serves as a coordination point for ATP.

It belongs to the rhamnulokinase family. Mg(2+) is required as a cofactor.

The catalysed reaction is L-rhamnulose + ATP = L-rhamnulose 1-phosphate + ADP + H(+). Its pathway is carbohydrate degradation; L-rhamnose degradation; glycerone phosphate from L-rhamnose: step 2/3. Functionally, involved in the catabolism of L-rhamnose (6-deoxy-L-mannose). Catalyzes the transfer of the gamma-phosphate group from ATP to the 1-hydroxyl group of L-rhamnulose to yield L-rhamnulose 1-phosphate. This is Rhamnulokinase from Bacteroides thetaiotaomicron (strain ATCC 29148 / DSM 2079 / JCM 5827 / CCUG 10774 / NCTC 10582 / VPI-5482 / E50).